We begin with the raw amino-acid sequence, 489 residues long: Ribulose bisphosphate carboxylase large chain (489 aa).

Asn-128 and Thr-178 together coordinate substrate. The Proton acceptor role is filled by Lys-180. Lys-182 provides a ligand contact to substrate. Mg(2+) contacts are provided by Lys-206, Asp-208, and Glu-209. Lys-206 bears the N6-carboxylysine mark. Catalysis depends on His-298, which acts as the Proton acceptor. Substrate is bound by residues Arg-299, His-331, and Ser-383.

Belongs to the RuBisCO large chain family. Type I subfamily. Heterohexadecamer of 8 large chains and 8 small chains. Requires Mg(2+) as cofactor.

It catalyses the reaction 2 (2R)-3-phosphoglycerate + 2 H(+) = D-ribulose 1,5-bisphosphate + CO2 + H2O. It carries out the reaction D-ribulose 1,5-bisphosphate + O2 = 2-phosphoglycolate + (2R)-3-phosphoglycerate + 2 H(+). RuBisCO catalyzes two reactions: the carboxylation of D-ribulose 1,5-bisphosphate, the primary event in carbon dioxide fixation, as well as the oxidative fragmentation of the pentose substrate. Both reactions occur simultaneously and in competition at the same active site. This is Ribulose bisphosphate carboxylase large chain from Nitrosospira sp. (strain 40KI).